The chain runs to 444 residues: Glutamyl-tRNA reductase (444 aa).

Residues 49–52, S109, 114–116, and Q120 contribute to the substrate site; these read TCNR and ETQ. The active-site Nucleophile is the C50. 189–194 contacts NADP(+); the sequence is GAGKMG.

Belongs to the glutamyl-tRNA reductase family. In terms of assembly, homodimer.

It carries out the reaction (S)-4-amino-5-oxopentanoate + tRNA(Glu) + NADP(+) = L-glutamyl-tRNA(Glu) + NADPH + H(+). It functions in the pathway porphyrin-containing compound metabolism; protoporphyrin-IX biosynthesis; 5-aminolevulinate from L-glutamyl-tRNA(Glu): step 1/2. Its function is as follows. Catalyzes the NADPH-dependent reduction of glutamyl-tRNA(Glu) to glutamate 1-semialdehyde (GSA). This chain is Glutamyl-tRNA reductase, found in Bacillus cereus (strain ATCC 14579 / DSM 31 / CCUG 7414 / JCM 2152 / NBRC 15305 / NCIMB 9373 / NCTC 2599 / NRRL B-3711).